The following is a 454-amino-acid chain: Bifunctional protein GlmU (454 aa).

The segment at 1–227 (MSKLSVVILA…MMEVEGANNR (227 aa)) is pyrophosphorylase. UDP-N-acetyl-alpha-D-glucosamine is bound by residues 9–12 (LAAG), lysine 23, glutamine 74, 79–80 (GT), 101–103 (YGD), glycine 138, glutamate 152, asparagine 167, and asparagine 225. Position 103 (aspartate 103) interacts with Mg(2+). Asparagine 225 provides a ligand contact to Mg(2+). A linker region spans residues 228-248 (LQLAALERYFQRKQATALLLA). The tract at residues 249-454 (GVSLADPERF…ADWERPSKKK (206 aa)) is N-acetyltransferase. UDP-N-acetyl-alpha-D-glucosamine-binding residues include arginine 331 and lysine 349. The active-site Proton acceptor is histidine 361. The UDP-N-acetyl-alpha-D-glucosamine site is built by tyrosine 364 and asparagine 375. Residues alanine 378, 384-385 (NY), serine 403, alanine 421, and arginine 438 contribute to the acetyl-CoA site.

This sequence in the N-terminal section; belongs to the N-acetylglucosamine-1-phosphate uridyltransferase family. The protein in the C-terminal section; belongs to the transferase hexapeptide repeat family. Homotrimer. It depends on Mg(2+) as a cofactor.

It localises to the cytoplasm. The catalysed reaction is alpha-D-glucosamine 1-phosphate + acetyl-CoA = N-acetyl-alpha-D-glucosamine 1-phosphate + CoA + H(+). It carries out the reaction N-acetyl-alpha-D-glucosamine 1-phosphate + UTP + H(+) = UDP-N-acetyl-alpha-D-glucosamine + diphosphate. It participates in nucleotide-sugar biosynthesis; UDP-N-acetyl-alpha-D-glucosamine biosynthesis; N-acetyl-alpha-D-glucosamine 1-phosphate from alpha-D-glucosamine 6-phosphate (route II): step 2/2. Its pathway is nucleotide-sugar biosynthesis; UDP-N-acetyl-alpha-D-glucosamine biosynthesis; UDP-N-acetyl-alpha-D-glucosamine from N-acetyl-alpha-D-glucosamine 1-phosphate: step 1/1. It functions in the pathway bacterial outer membrane biogenesis; LPS lipid A biosynthesis. Functionally, catalyzes the last two sequential reactions in the de novo biosynthetic pathway for UDP-N-acetylglucosamine (UDP-GlcNAc). The C-terminal domain catalyzes the transfer of acetyl group from acetyl coenzyme A to glucosamine-1-phosphate (GlcN-1-P) to produce N-acetylglucosamine-1-phosphate (GlcNAc-1-P), which is converted into UDP-GlcNAc by the transfer of uridine 5-monophosphate (from uridine 5-triphosphate), a reaction catalyzed by the N-terminal domain. This is Bifunctional protein GlmU from Actinobacillus succinogenes (strain ATCC 55618 / DSM 22257 / CCUG 43843 / 130Z).